Here is a 289-residue protein sequence, read N- to C-terminus: 4-hydroxy-3-methylbut-2-enyl diphosphate reductase (289 aa).

[4Fe-4S] cluster is bound at residue C12. Residues H41 and H84 each contribute to the (2E)-4-hydroxy-3-methylbut-2-enyl diphosphate site. 2 residues coordinate dimethylallyl diphosphate: H41 and H84. Positions 41 and 84 each coordinate isopentenyl diphosphate. Position 106 (C106) interacts with [4Fe-4S] cluster. Residue H134 participates in (2E)-4-hydroxy-3-methylbut-2-enyl diphosphate binding. A dimethylallyl diphosphate-binding site is contributed by H134. H134 serves as a coordination point for isopentenyl diphosphate. E136 acts as the Proton donor in catalysis. S172 serves as a coordination point for (2E)-4-hydroxy-3-methylbut-2-enyl diphosphate. C200 serves as a coordination point for [4Fe-4S] cluster. (2E)-4-hydroxy-3-methylbut-2-enyl diphosphate is bound by residues S229, N231, and S273. The dimethylallyl diphosphate site is built by S229, N231, and S273. The isopentenyl diphosphate site is built by S229, N231, and S273.

The protein belongs to the IspH family. It depends on [4Fe-4S] cluster as a cofactor.

The catalysed reaction is isopentenyl diphosphate + 2 oxidized [2Fe-2S]-[ferredoxin] + H2O = (2E)-4-hydroxy-3-methylbut-2-enyl diphosphate + 2 reduced [2Fe-2S]-[ferredoxin] + 2 H(+). The enzyme catalyses dimethylallyl diphosphate + 2 oxidized [2Fe-2S]-[ferredoxin] + H2O = (2E)-4-hydroxy-3-methylbut-2-enyl diphosphate + 2 reduced [2Fe-2S]-[ferredoxin] + 2 H(+). The protein operates within isoprenoid biosynthesis; dimethylallyl diphosphate biosynthesis; dimethylallyl diphosphate from (2E)-4-hydroxy-3-methylbutenyl diphosphate: step 1/1. It participates in isoprenoid biosynthesis; isopentenyl diphosphate biosynthesis via DXP pathway; isopentenyl diphosphate from 1-deoxy-D-xylulose 5-phosphate: step 6/6. In terms of biological role, catalyzes the conversion of 1-hydroxy-2-methyl-2-(E)-butenyl 4-diphosphate (HMBPP) into a mixture of isopentenyl diphosphate (IPP) and dimethylallyl diphosphate (DMAPP). Acts in the terminal step of the DOXP/MEP pathway for isoprenoid precursor biosynthesis. The protein is 4-hydroxy-3-methylbut-2-enyl diphosphate reductase of Opitutus terrae (strain DSM 11246 / JCM 15787 / PB90-1).